The chain runs to 272 residues: Ribosomal RNA small subunit methyltransferase A (272 aa).

6 residues coordinate S-adenosyl-L-methionine: Asn18, Leu20, Gly45, Glu66, Asp91, and Asn113.

The protein belongs to the class I-like SAM-binding methyltransferase superfamily. rRNA adenine N(6)-methyltransferase family. RsmA subfamily.

Its subcellular location is the cytoplasm. It carries out the reaction adenosine(1518)/adenosine(1519) in 16S rRNA + 4 S-adenosyl-L-methionine = N(6)-dimethyladenosine(1518)/N(6)-dimethyladenosine(1519) in 16S rRNA + 4 S-adenosyl-L-homocysteine + 4 H(+). In terms of biological role, specifically dimethylates two adjacent adenosines (A1518 and A1519) in the loop of a conserved hairpin near the 3'-end of 16S rRNA in the 30S particle. May play a critical role in biogenesis of 30S subunits. This Proteus mirabilis (strain HI4320) protein is Ribosomal RNA small subunit methyltransferase A.